Here is a 571-residue protein sequence, read N- to C-terminus: S100P-binding protein (571 aa).

Over residues Ser270 to Glu280 the composition is skewed to acidic residues. Disordered stretches follow at residues Ser270–Val312 and Asn356–Ser385. Residues Thr299–Leu309 are compositionally biased toward polar residues. The span at Pro365–Pro378 shows a compositional bias: pro residues.

The protein resides in the nucleus. In Xenopus tropicalis (Western clawed frog), this protein is S100P-binding protein (s100pbp).